We begin with the raw amino-acid sequence, 204 residues long: Phosphoribosyl-dephospho-CoA transferase (204 aa).

Residues Asp-129 and Asp-131 contribute to the active site.

The protein belongs to the MdcG family.

The catalysed reaction is apo-[malonate decarboxylase ACP] + 2'-(5''-triphospho-alpha-D-ribosyl)-3'-dephospho-CoA = holo-[malonate decarboxylase ACP] + diphosphate. Transfers 2'-(5-triphosphoribosyl)-3'-dephosphocoenzyme-A to the apo-[acyl-carrier-protein] of the malonate decarboxylase to yield holo-[acyl-carrier-protein]. In Pseudomonas putida (Arthrobacter siderocapsulatus), this protein is Phosphoribosyl-dephospho-CoA transferase.